We begin with the raw amino-acid sequence, 533 residues long: Trigger factor (533 aa).

One can recognise a PPIase FKBP-type domain in the interval 164–249 (GDQLIIDFTG…VKQVKVETDT (86 aa)). Positions 436 to 533 (EAAIEAEAEE…APAKKPAAKK (98 aa)) are disordered. Positions 465-477 (AAAKKAPAKKAPA) are enriched in basic residues. Residues 481–490 (AAKDGDEKPA) show a composition bias toward basic and acidic residues. Basic residues-rich tracts occupy residues 494–506 (APAK…KAST) and 515–533 (PAKK…AAKK).

Belongs to the FKBP-type PPIase family. Tig subfamily.

Its subcellular location is the cytoplasm. The enzyme catalyses [protein]-peptidylproline (omega=180) = [protein]-peptidylproline (omega=0). Functionally, involved in protein export. Acts as a chaperone by maintaining the newly synthesized protein in an open conformation. Functions as a peptidyl-prolyl cis-trans isomerase. In Erythrobacter litoralis (strain HTCC2594), this protein is Trigger factor.